The sequence spans 61 residues: MAKDIITGRKTVFGNKRSKALNSVRRSWKPNLQKVRILVDGKPKRVWVSARALKSGKVKRA.

The protein belongs to the bacterial ribosomal protein bL28 family.

The chain is Large ribosomal subunit protein bL28 from Lactobacillus gasseri (strain ATCC 33323 / DSM 20243 / BCRC 14619 / CIP 102991 / JCM 1131 / KCTC 3163 / NCIMB 11718 / NCTC 13722 / AM63).